Here is a 263-residue protein sequence, read N- to C-terminus: MLATIDPIALRLGPISIHWYAICIVSGLLLAVYLAQRLAPEKGINPEHILDFILLAFPIAIVGARLYYVIFQWSYYSQNPSEIFAIWNGGIAIYGGLIAGAAVLYWFAKRHAIAVLDFLDIAAPGVMIAQSIGRWGNFVNQEAYGKAVSQLNYLPEIIRQQMFIDGSYRVPTFLYESLWNLVGFSIILGLRYFNKGLRQGDVTSFYLIWYGLGRFVIEGMRTDSLMFAGLRVSQWVSISIIILGAVLLYFRKQRQKADYKMKN.

Transmembrane regions (helical) follow at residues 15-35 (ISIHWYAICIVSGLLLAVYLA), 52-72 (FILLAFPIAIVGARLYYVIFQ), 83-103 (IFAIWNGGIAIYGGLIAGAAV), and 112-132 (AIAVLDFLDIAAPGVMIAQSI). Residue arginine 134 participates in a 1,2-diacyl-sn-glycero-3-phospho-(1'-sn-glycerol) binding. Transmembrane regions (helical) follow at residues 170–190 (VPTFLYESLWNLVGFSIILGL), 200–220 (GDVTSFYLIWYGLGRFVIEGM), and 230–250 (LRVSQWVSISIIILGAVLLYF).

This sequence belongs to the Lgt family.

It is found in the cell membrane. The enzyme catalyses L-cysteinyl-[prolipoprotein] + a 1,2-diacyl-sn-glycero-3-phospho-(1'-sn-glycerol) = an S-1,2-diacyl-sn-glyceryl-L-cysteinyl-[prolipoprotein] + sn-glycerol 1-phosphate + H(+). The protein operates within protein modification; lipoprotein biosynthesis (diacylglyceryl transfer). Its function is as follows. Catalyzes the transfer of the diacylglyceryl group from phosphatidylglycerol to the sulfhydryl group of the N-terminal cysteine of a prolipoprotein, the first step in the formation of mature lipoproteins. This is Phosphatidylglycerol--prolipoprotein diacylglyceryl transferase from Streptococcus thermophilus (strain ATCC BAA-250 / LMG 18311).